The primary structure comprises 550 residues: Hydroxylamine reductase (550 aa).

Residues C3, C6, C18, and C25 each coordinate [2Fe-2S] cluster. The hybrid [4Fe-2O-2S] cluster site is built by H249, E273, C317, C405, C433, C458, E492, and K494. C405 is subject to Cysteine persulfide.

Belongs to the HCP family. It depends on [2Fe-2S] cluster as a cofactor. Hybrid [4Fe-2O-2S] cluster is required as a cofactor.

It is found in the cytoplasm. It carries out the reaction A + NH4(+) + H2O = hydroxylamine + AH2 + H(+). Catalyzes the reduction of hydroxylamine to form NH(3) and H(2)O. In Yersinia pseudotuberculosis serotype O:1b (strain IP 31758), this protein is Hydroxylamine reductase.